Reading from the N-terminus, the 312-residue chain is Olfactory receptor 8K3 (312 aa).

Residues 1–25 (MEQHNLTTVNEFILTGITDIAELQA) are Extracellular-facing. The N-linked (GlcNAc...) asparagine glycan is linked to asparagine 5. A helical membrane pass occupies residues 26–46 (PLFALFLMIYVISVMGNLGMI). Over 47 to 54 (VLTKLDSR) the chain is Cytoplasmic. Residues 55–75 (LQTPMYFFLRHLAFMDLGYST) traverse the membrane as a helical segment. Topologically, residues 76–99 (TVGPKMLVNFVVDKNIISYYFCAT) are extracellular. A disulfide bridge connects residues cysteine 97 and cysteine 189. Residues 100 to 120 (QLAFFLVFIGSELFILSAMSY) form a helical membrane-spanning segment. Topologically, residues 121–139 (DLYVAICNPLLYTVIMSRR) are cytoplasmic. Residues 140-160 (VCQVLVAIPYLYCTFISLLVT) form a helical membrane-spanning segment. Over 161 to 197 (IKIFTLSFCGYNVISHFYCDSLPLLPLLCSNTHEIEL) the chain is Extracellular. The helical transmembrane segment at 198–217 (IILIFAAIDLISSLLIVLLS) threads the bilayer. Topologically, residues 218–236 (YLLILVAILRMNSAGRQKA) are cytoplasmic. The helical transmembrane segment at 237 to 257 (FSTCGAHLTVVIVFYGTLLFM) threads the bilayer. At 258-270 (YVQPKSSHSFDTD) the chain is on the extracellular side. Residues 271-291 (KVASIFYTLVIPMLNPLIYSL) traverse the membrane as a helical segment. Residues 292 to 312 (RNKDVKYALRRTWNNLCNIFV) lie on the Cytoplasmic side of the membrane.

It belongs to the G-protein coupled receptor 1 family.

It localises to the cell membrane. Odorant receptor. This is Olfactory receptor 8K3 (OR8K3) from Homo sapiens (Human).